The following is a 165-amino-acid chain: 6,7-dimethyl-8-ribityllumazine synthase (165 aa).

5-amino-6-(D-ribitylamino)uracil-binding positions include Phe24, 62-64 (AFE), and 86-88 (AVI). Residue 91–92 (DT) coordinates (2S)-2-hydroxy-3-oxobutyl phosphate. Residue His94 is the Proton donor of the active site. Phe119 is a binding site for 5-amino-6-(D-ribitylamino)uracil. Arg133 contacts (2S)-2-hydroxy-3-oxobutyl phosphate.

This sequence belongs to the DMRL synthase family.

The enzyme catalyses (2S)-2-hydroxy-3-oxobutyl phosphate + 5-amino-6-(D-ribitylamino)uracil = 6,7-dimethyl-8-(1-D-ribityl)lumazine + phosphate + 2 H2O + H(+). It functions in the pathway cofactor biosynthesis; riboflavin biosynthesis; riboflavin from 2-hydroxy-3-oxobutyl phosphate and 5-amino-6-(D-ribitylamino)uracil: step 1/2. Catalyzes the formation of 6,7-dimethyl-8-ribityllumazine by condensation of 5-amino-6-(D-ribitylamino)uracil with 3,4-dihydroxy-2-butanone 4-phosphate. This is the penultimate step in the biosynthesis of riboflavin. In Prochlorococcus marinus (strain MIT 9303), this protein is 6,7-dimethyl-8-ribityllumazine synthase.